Consider the following 194-residue polypeptide: Adenine phosphoribosyltransferase (194 aa).

Belongs to the purine/pyrimidine phosphoribosyltransferase family. In terms of assembly, homodimer.

It localises to the cytoplasm. The enzyme catalyses AMP + diphosphate = 5-phospho-alpha-D-ribose 1-diphosphate + adenine. It functions in the pathway purine metabolism; AMP biosynthesis via salvage pathway; AMP from adenine: step 1/1. Catalyzes a salvage reaction resulting in the formation of AMP, that is energically less costly than de novo synthesis. This Albidiferax ferrireducens (strain ATCC BAA-621 / DSM 15236 / T118) (Rhodoferax ferrireducens) protein is Adenine phosphoribosyltransferase.